We begin with the raw amino-acid sequence, 87 residues long: MKTKLREMLRFPCFFTYKIIGLAQPELIDQIIKVIQIQIPGDYTPQVKSSNRGNYLSVSITICAKNFEQIECLYHEISKINIVRMVL.

The protein belongs to the UPF0250 family.

The chain is UPF0250 protein BUAPTUC7_482 from Buchnera aphidicola subsp. Acyrthosiphon pisum (strain Tuc7).